Reading from the N-terminus, the 251-residue chain is Pyridoxine 5'-phosphate synthase (251 aa).

A 3-amino-2-oxopropyl phosphate-binding site is contributed by Asn-7. A 1-deoxy-D-xylulose 5-phosphate-binding site is contributed by 9-10 (DH). Arg-18 serves as a coordination point for 3-amino-2-oxopropyl phosphate. His-43 serves as the catalytic Proton acceptor. Residues Arg-45 and His-50 each contribute to the 1-deoxy-D-xylulose 5-phosphate site. Catalysis depends on Glu-70, which acts as the Proton acceptor. 1-deoxy-D-xylulose 5-phosphate is bound at residue Thr-100. His-198 serves as the catalytic Proton donor. 3-amino-2-oxopropyl phosphate is bound by residues Ala-199 and 220 to 221 (GH).

Belongs to the PNP synthase family. Homooctamer; tetramer of dimers.

The protein localises to the cytoplasm. The enzyme catalyses 3-amino-2-oxopropyl phosphate + 1-deoxy-D-xylulose 5-phosphate = pyridoxine 5'-phosphate + phosphate + 2 H2O + H(+). Its pathway is cofactor biosynthesis; pyridoxine 5'-phosphate biosynthesis; pyridoxine 5'-phosphate from D-erythrose 4-phosphate: step 5/5. Catalyzes the complicated ring closure reaction between the two acyclic compounds 1-deoxy-D-xylulose-5-phosphate (DXP) and 3-amino-2-oxopropyl phosphate (1-amino-acetone-3-phosphate or AAP) to form pyridoxine 5'-phosphate (PNP) and inorganic phosphate. This Aromatoleum aromaticum (strain DSM 19018 / LMG 30748 / EbN1) (Azoarcus sp. (strain EbN1)) protein is Pyridoxine 5'-phosphate synthase.